Reading from the N-terminus, the 208-residue chain is TM2 domain-containing protein 1 (208 aa).

The N-terminal stretch at 1–37 (MAAAWPAGRASPAAGPPGLLRTLWLVTVAAGHCGAAA) is a signal peptide. At 38 to 129 (SGAVGGEETP…YSYKVAVALS (92 aa)) the chain is on the extracellular side. N-linked (GlcNAc...) asparagine glycosylation is found at Asn-73, Asn-76, and Asn-97. A TM2 domain is found at 119–167 (GYSYKVAVALSLFLGWLGADRFYLGYPALGLLKFCTVGFCGIGSLIDFI). The chain crosses the membrane as a helical span at residues 130-150 (LFLGWLGADRFYLGYPALGLL). Topologically, residues 151–154 (KFCT) are cytoplasmic. A helical transmembrane segment spans residues 155–175 (VGFCGIGSLIDFILISMQIVG). At 176–208 (PSDGSSYIIDYYGTRLTRLSITNETFRKTQLYP) the chain is on the extracellular side. Asn-198 carries an N-linked (GlcNAc...) asparagine glycan.

This sequence belongs to the TM2 family. In terms of assembly, interacts with APP beta-APP42 (amyloid-beta protein 42). N-glycosylated.

Its subcellular location is the membrane. In terms of biological role, may participate in amyloid-beta-induced apoptosis via its interaction with beta-APP42. This is TM2 domain-containing protein 1 (Tm2d1) from Mus musculus (Mouse).